The primary structure comprises 249 residues: Aliphatic sulfonates import ATP-binding protein SsuB 2 (249 aa).

Positions 5-233 (LDLLEIRKAY…PRDRRAVELA (229 aa)) constitute an ABC transporter domain. 37–44 (GPSGCGKS) serves as a coordination point for ATP.

Belongs to the ABC transporter superfamily. Aliphatic sulfonates importer (TC 3.A.1.17.2) family. In terms of assembly, the complex is composed of two ATP-binding proteins (SsuB), two transmembrane proteins (SsuC) and a solute-binding protein (SsuA).

It is found in the cell inner membrane. The enzyme catalyses ATP + H2O + aliphatic sulfonate-[sulfonate-binding protein]Side 1 = ADP + phosphate + aliphatic sulfonateSide 2 + [sulfonate-binding protein]Side 1.. Functionally, part of the ABC transporter complex SsuABC involved in aliphatic sulfonates import. Responsible for energy coupling to the transport system. The chain is Aliphatic sulfonates import ATP-binding protein SsuB 2 from Pseudomonas aeruginosa (strain ATCC 15692 / DSM 22644 / CIP 104116 / JCM 14847 / LMG 12228 / 1C / PRS 101 / PAO1).